A 156-amino-acid polypeptide reads, in one-letter code: ATP synthase subunit b 1 (156 aa).

Residues 5–27 traverse the membrane as a helical segment; sequence FTLISQAMAFAIFIWFTVRFVWP.

Belongs to the ATPase B chain family. In terms of assembly, F-type ATPases have 2 components, F(1) - the catalytic core - and F(0) - the membrane proton channel. F(1) has five subunits: alpha(3), beta(3), gamma(1), delta(1), epsilon(1). F(0) has three main subunits: a(1), b(2) and c(10-14). The alpha and beta chains form an alternating ring which encloses part of the gamma chain. F(1) is attached to F(0) by a central stalk formed by the gamma and epsilon chains, while a peripheral stalk is formed by the delta and b chains.

The protein localises to the cell inner membrane. Functionally, f(1)F(0) ATP synthase produces ATP from ADP in the presence of a proton or sodium gradient. F-type ATPases consist of two structural domains, F(1) containing the extramembraneous catalytic core and F(0) containing the membrane proton channel, linked together by a central stalk and a peripheral stalk. During catalysis, ATP synthesis in the catalytic domain of F(1) is coupled via a rotary mechanism of the central stalk subunits to proton translocation. Its function is as follows. Component of the F(0) channel, it forms part of the peripheral stalk, linking F(1) to F(0). The protein is ATP synthase subunit b 1 of Nitrosospira multiformis (strain ATCC 25196 / NCIMB 11849 / C 71).